Reading from the N-terminus, the 284-residue chain is Putative ABC transporter ATP-binding protein PH1815 (284 aa).

The region spanning 4 to 244 (IEVEDVSFRY…VEFLRTIGVK (241 aa)) is the ABC transporter domain. 38-45 (GPSGSGKS) provides a ligand contact to ATP.

It belongs to the ABC transporter superfamily.

The protein resides in the cell membrane. Probably part of an ABC transporter complex. Responsible for energy coupling to the transport system. The polypeptide is Putative ABC transporter ATP-binding protein PH1815 (Pyrococcus horikoshii (strain ATCC 700860 / DSM 12428 / JCM 9974 / NBRC 100139 / OT-3)).